Reading from the N-terminus, the 374-residue chain is 5-hydroxytryptamine receptor 1D (374 aa).

Residues 1–35 (MSPPNQSLEGLPQEASNRSLNVTGAWDPEVLQALR) are Extracellular-facing. N-linked (GlcNAc...) asparagine glycosylation is found at N5, N17, and N21. Residues 36 to 61 (ISLVVVLSVITLATVLSNAFVLTTIL) traverse the membrane as a helical segment. Over 62-72 (LTKKLHTPANY) the chain is Cytoplasmic. Residues 73-94 (LIGSLATTDLLVSILVMPISIA) traverse the membrane as a helical segment. At 95–106 (YTTTRTWNFGQI) the chain is on the extracellular side. Residues 107-131 (LCDIWVSSDITCCTASILHLCVIAL) traverse the membrane as a helical segment. The cysteines at positions 108 and 185 are disulfide-linked. Serotonin-binding residues include D115 and C119. The short motif at 132 to 134 (DRY) is the DRY motif; important for ligand-induced conformation changes element. Residues 132 to 151 (DRYWAITDALEYSKRRTAGH) lie on the Cytoplasmic side of the membrane. A helical transmembrane segment spans residues 152–173 (AAAMIAAVWIISICISIPPLFW). Residues 174-191 (RQATAHEEMSDCLVNTSQ) lie on the Extracellular side of the membrane. The helical transmembrane segment at 192-215 (ISYTIYSTCGAFYIPSILLIILYG) threads the bilayer. Over 216–297 (RIYVAARSRI…ISAARERKAT (82 aa)) the chain is Cytoplasmic. A helical transmembrane segment spans residues 298–323 (KTLGIILGAFIICWLPFFVVSLVLPI). S318 provides a ligand contact to serotonin. Residues 324 to 332 (CRDSCWIHP) are Extracellular-facing. A helical transmembrane segment spans residues 333–356 (ALFDFFTWLGYLNSLINPVIYTVF). An NPxxY motif; important for ligand-induced conformation changes and signaling motif is present at residues 349 to 353 (NPVIY). The Cytoplasmic portion of the chain corresponds to 357 to 374 (NEDFRQAFQKVVHFRKIS).

Belongs to the G-protein coupled receptor 1 family. Homodimer. Heterodimer with HTR1B. In terms of tissue distribution, detected in the motor column in spinal cord, and in several cranial motor nuclei, including nucleus ambiguous, oculomotoris, trochelaris and abducens. Detected in gamma motor neurons in the lumbar spinal cord. Detected in proprioceptive sensory neurons in dorsal root ganglia.

Its subcellular location is the cell membrane. In terms of biological role, G-protein coupled receptor for 5-hydroxytryptamine (serotonin). Also functions as a receptor for ergot alkaloid derivatives, various anxiolytic and antidepressant drugs and other psychoactive substances. Ligand binding causes a conformation change that triggers signaling via guanine nucleotide-binding proteins (G proteins) and modulates the activity of downstream effectors, such as adenylate cyclase. HTR1D is coupled to G(i)/G(o) G alpha proteins and mediates inhibitory neurotransmission by inhibiting adenylate cyclase activity. Regulates the release of 5-hydroxytryptamine in the brain, and thereby affects neural activity. May also play a role in regulating the release of other neurotransmitters. May play a role in vasoconstriction. The polypeptide is 5-hydroxytryptamine receptor 1D (Htr1d) (Mus musculus (Mouse)).